A 591-amino-acid polypeptide reads, in one-letter code: Thiol:disulfide interchange protein DsbD 1 (591 aa).

The signal sequence occupies residues 1-18; the sequence is MRRLLTLILLLVALPAGA. Over 19-175 the chain is Periplasmic; it reads GLFDSRPGAS…GPLEHKGKRS (157 aa). 2 disulfide bridges follow: Cys134/Cys140 and Cys191/Cys313. The chain crosses the membrane as a helical span at residues 176-196; that stretch reads LLFFFLAGLTLTFTPCVLPML. Residues 197-213 are Cytoplasmic-facing; that stretch reads PILSGVVLRGRPGGGRG. The helical transmembrane segment at 214–234 threads the bilayer; the sequence is FVLSLAYVLPMALCFALLGAL. The Periplasmic portion of the chain corresponds to 235-251; sequence MGMFGASLNLQAQLQSP. The chain crosses the membrane as a helical span at residues 252–272; the sequence is WVLVPFAAFFALFAVAMFGFF. The Cytoplasmic portion of the chain corresponds to 273-295; sequence ELRLPGFIREPLDRLAGDARGGS. The helical transmembrane segment at 296–316 threads the bilayer; that stretch reads ILGAATLGVLSSLLVSPCVSA. Residues 317–338 lie on the Periplasmic side of the membrane; sequence PLAASLLYISASGDAWGGGLQL. Residues 339–359 form a helical membrane-spanning segment; sequence FALGLGMGTPLVVFGAGGGAL. Residues 360–365 lie on the Cytoplasmic side of the membrane; sequence LPKSGA. A helical transmembrane segment spans residues 366–386; sequence WMNGVRNAFGVLLLAVAVWLL. Residues 387-392 are Periplasmic-facing; that stretch reads ERVVSG. A helical transmembrane segment spans residues 393–413; the sequence is PVALMLWGMLAGGAGLALGAL. Residues 414–423 are Cytoplasmic-facing; the sequence is EFTPKSAARR. A helical transmembrane segment spans residues 424-444; the sequence is LLQLLGLMFLTYAVAAWIGAL. At 445–591 the chain is on the periplasmic side; that stretch reads QGESDPIHPL…ERLRRAATRQ (147 aa). The Thioredoxin domain occupies 452 to 589; that stretch reads HPLGRSVPSI…LAERLRRAAT (138 aa). A disulfide bridge links Cys504 with Cys507.

This sequence belongs to the thioredoxin family. DsbD subfamily.

It is found in the cell inner membrane. It catalyses the reaction [protein]-dithiol + NAD(+) = [protein]-disulfide + NADH + H(+). It carries out the reaction [protein]-dithiol + NADP(+) = [protein]-disulfide + NADPH + H(+). Its function is as follows. Required to facilitate the formation of correct disulfide bonds in some periplasmic proteins and for the assembly of the periplasmic c-type cytochromes. Acts by transferring electrons from cytoplasmic thioredoxin to the periplasm. This transfer involves a cascade of disulfide bond formation and reduction steps. The polypeptide is Thiol:disulfide interchange protein DsbD 1 (Pseudomonas aeruginosa (strain ATCC 15692 / DSM 22644 / CIP 104116 / JCM 14847 / LMG 12228 / 1C / PRS 101 / PAO1)).